Consider the following 1386-residue polypeptide: DNA-directed RNA polymerase subunit beta (1386 aa).

It belongs to the RNA polymerase beta chain family. As to quaternary structure, the RNAP catalytic core consists of 2 alpha, 1 beta, 1 beta' and 1 omega subunit. When a sigma factor is associated with the core the holoenzyme is formed, which can initiate transcription.

The enzyme catalyses RNA(n) + a ribonucleoside 5'-triphosphate = RNA(n+1) + diphosphate. In terms of biological role, DNA-dependent RNA polymerase catalyzes the transcription of DNA into RNA using the four ribonucleoside triphosphates as substrates. The sequence is that of DNA-directed RNA polymerase subunit beta from Nitratiruptor sp. (strain SB155-2).